The chain runs to 284 residues: Avenin-like b3 (284 aa).

The N-terminal stretch at 1-18 (MKVFILALLALTATTAIA) is a signal peptide.

The protein belongs to the prolamin family. Contains disulfide bonds.

In terms of biological role, seed storage protein. Might be integrated via inter-chain disulfide bonds within the glutenin polymer. In Triticum aestivum (Wheat), this protein is Avenin-like b3.